A 368-amino-acid polypeptide reads, in one-letter code: MAALGKAEESQGCFGLFLLLPGPSMQPRLFVLVALSVLLLSGRAGALTEGLYCGRQVCYDVLGVSRDASKGDIARAYRQLARKYHPDRYRPGEPPGPDGETRESAQEKFLLVATAYETLKDEETRKDYDYMLDHPEEYYRHYYHYYSRRLAPKVDVRIVILVSVCAISIFQYYSWWSSYNEAINYLATVTKYRIQAMEIAKQQGLLNRTKEKGKNRRSKEEIKSEEEEIIRDIIKNKIDIKGGYQKPQIFDILLFQIILFPYYIFKYISWYVHWIYTFNIQGKEYGEEEKLYLIRRNMKMSQSQFDTLEEHRKNSFLEQKLWIKENYEVYKLEQEEEMKKKMASDPRWKRYRRWMKNEGPGRLTFADD.

Residues 25-47 traverse the membrane as a helical segment; the sequence is MQPRLFVLVALSVLLLSGRAGAL. The J domain occupies 57–132; it reads VCYDVLGVSR…ETRKDYDYML (76 aa). Helical transmembrane passes span 158 to 178 and 252 to 272; these read IVIL…WWSS and ILLF…SWYV.

This sequence belongs to the DNAJC25 family.

The protein resides in the membrane. The chain is DnaJ homolog subfamily C member 25 (dnajc25) from Xenopus tropicalis (Western clawed frog).